A 126-amino-acid chain; its full sequence is Histone H2B 1/2/3/4/6 (126 aa).

Residues 1–12 (MPEPAKSAPAPK) show a composition bias toward low complexity. A disordered region spans residues 1-36 (MPEPAKSAPAPKKGSKKAVTKTQKKGDKKRKKSRKE). 2 positions are modified to N6-acetyllysine: K6 and K13. Basic residues predominate over residues 13-34 (KGSKKAVTKTQKKGDKKRKKSR). A Phosphoserine modification is found at S15. N6-acetyllysine occurs at positions 16 and 21. K121 is covalently cross-linked (Glycyl lysine isopeptide (Lys-Gly) (interchain with G-Cter in ubiquitin)).

Belongs to the histone H2B family. As to quaternary structure, the nucleosome is a histone octamer containing two molecules each of H2A, H2B, H3 and H4 assembled in one H3-H4 heterotetramer and two H2A-H2B heterodimers. The octamer wraps approximately 147 bp of DNA. Post-translationally, monoubiquitination of Lys-121 by the BRE1 gives a specific tag for epigenetic transcriptional activation and is also prerequisite for histone H3 'Lys-4' and 'Lys-79' methylation. In terms of processing, phosphorylated on Ser-15 during apoptosis; which facilitates apoptotic chromatin condensation.

It is found in the nucleus. The protein localises to the chromosome. In terms of biological role, core component of nucleosome. Nucleosomes wrap and compact DNA into chromatin, limiting DNA accessibility to the cellular machineries which require DNA as a template. Histones thereby play a central role in transcription regulation, DNA repair, DNA replication and chromosomal stability. DNA accessibility is regulated via a complex set of post-translational modifications of histones, also called histone code, and nucleosome remodeling. Functionally, has broad-spectrum antibacterial activity. May be important in the antimicrobial defenses of chick reproductive system during follicle development in the ovary and egg formation in the oviduct. This Gallus gallus (Chicken) protein is Histone H2B 1/2/3/4/6 (H2B-I).